We begin with the raw amino-acid sequence, 473 residues long: Ribulose bisphosphate carboxylase large chain (473 aa).

Substrate is bound by residues N116 and T166. K168 serves as the catalytic Proton acceptor. K170 is a binding site for substrate. Positions 194, 196, and 197 each coordinate Mg(2+). K194 carries the post-translational modification N6-carboxylysine. H287 serves as the catalytic Proton acceptor. R288, H320, and S372 together coordinate substrate.

This sequence belongs to the RuBisCO large chain family. Type I subfamily. In terms of assembly, heterohexadecamer of 8 large chains and 8 small chains. The cofactor is Mg(2+).

It carries out the reaction 2 (2R)-3-phosphoglycerate + 2 H(+) = D-ribulose 1,5-bisphosphate + CO2 + H2O. The enzyme catalyses D-ribulose 1,5-bisphosphate + O2 = 2-phosphoglycolate + (2R)-3-phosphoglycerate + 2 H(+). RuBisCO catalyzes two reactions: the carboxylation of D-ribulose 1,5-bisphosphate, the primary event in carbon dioxide fixation, as well as the oxidative fragmentation of the pentose substrate. Both reactions occur simultaneously and in competition at the same active site. This Methylococcus capsulatus (strain ATCC 33009 / NCIMB 11132 / Bath) protein is Ribulose bisphosphate carboxylase large chain.